A 433-amino-acid polypeptide reads, in one-letter code: G-protein coupled receptor 22 (433 aa).

Topologically, residues 1–45 (MCFSPILEINMQSESNITVRDDIDDINTNMYQPLSYPLSFQVSLT) are extracellular. Residue N16 is glycosylated (N-linked (GlcNAc...) asparagine). A helical membrane pass occupies residues 46–66 (GFLMLEIVLGLGSNLTVLVLY). The Cytoplasmic portion of the chain corresponds to 67–85 (CMKSNLINSVSNIITMNLH). A helical membrane pass occupies residues 86–106 (VLDVIICVGCIPLTIVILLLS). The Extracellular portion of the chain corresponds to 107–115 (LESNTALIC). A helical transmembrane segment spans residues 116–136 (CFHEACVSFASVSTAINVFAI). Residues 137-156 (TLDRYDISVKPANRILTMGR) lie on the Cytoplasmic side of the membrane. Residues 157–177 (AVMLMISIWIFSFFSFLIPFI) traverse the membrane as a helical segment. Topologically, residues 178–208 (EVNFFSLQSGNTWENKTLLCVSTNEYYTELG) are extracellular. A glycan (N-linked (GlcNAc...) asparagine) is linked at N192. Residues 209–229 (MYYHLLVQIPIFFFTVVVMLI) form a helical membrane-spanning segment. Residues 230–315 (TYTKILQALN…ERQKRVFRMS (86 aa)) are Cytoplasmic-facing. A helical membrane pass occupies residues 316–336 (LLIISTFLLCWTPISVLNTTI). The Extracellular portion of the chain corresponds to 337 to 349 (LCLGPSDLLVKLR). Residues 350–370 (LCFLVMAYGTTIFHPLLYAFT) traverse the membrane as a helical segment. At 371 to 433 (RQKFQKVLKS…KCLVPQVVTD (63 aa)) the chain is on the cytoplasmic side.

This sequence belongs to the G-protein coupled receptor 1 family. As to expression, high expression in adult and fetal heart tissue. Expressed in the brain, with enrichment in the accumbens, amygdala, cerebellum, cortex, and hippocampus regions.

It localises to the cell membrane. Its function is as follows. Orphan G-protein coupled receptor. Seems to act through a G(i)/G(o) mediated pathway. May be involved in ciliogenesis. The polypeptide is G-protein coupled receptor 22 (Homo sapiens (Human)).